We begin with the raw amino-acid sequence, 338 residues long: 1-aminocyclopropane-1-carboxylate deaminase (338 aa).

K51 carries the post-translational modification N6-(pyridoxal phosphate)lysine. S78 acts as the Nucleophile in catalysis.

This sequence belongs to the ACC deaminase/D-cysteine desulfhydrase family. Homotrimer. It depends on pyridoxal 5'-phosphate as a cofactor.

It catalyses the reaction 1-aminocyclopropane-1-carboxylate + H2O = 2-oxobutanoate + NH4(+). Catalyzes a cyclopropane ring-opening reaction, the irreversible conversion of 1-aminocyclopropane-1-carboxylate (ACC) to ammonia and alpha-ketobutyrate. Allows growth on ACC as a nitrogen source. This chain is 1-aminocyclopropane-1-carboxylate deaminase, found in Burkholderia cenocepacia (strain HI2424).